A 300-amino-acid polypeptide reads, in one-letter code: Protoheme IX farnesyltransferase 1 (300 aa).

Helical transmembrane passes span 26-46 (VVVL…RAGV), 48-68 (WTVL…AAAV), 97-117 (AALA…LTFT), 120-140 (LTAW…TGFL), 148-168 (IVIG…AATG), 174-194 (PLLL…ALAI), 226-246 (FALL…VLYL), and 280-300 (IYYL…LLNL).

It belongs to the UbiA prenyltransferase family. Protoheme IX farnesyltransferase subfamily.

It is found in the cell inner membrane. The catalysed reaction is heme b + (2E,6E)-farnesyl diphosphate + H2O = Fe(II)-heme o + diphosphate. The protein operates within porphyrin-containing compound metabolism; heme O biosynthesis; heme O from protoheme: step 1/1. In terms of biological role, converts heme B (protoheme IX) to heme O by substitution of the vinyl group on carbon 2 of heme B porphyrin ring with a hydroxyethyl farnesyl side group. This Pseudomonas fluorescens (strain ATCC BAA-477 / NRRL B-23932 / Pf-5) protein is Protoheme IX farnesyltransferase 1.